The following is a 412-amino-acid chain: D-amino acid dehydrogenase 3 (412 aa).

Residue 4–18 participates in FAD binding; the sequence is IVVIGAGIAGVSTAY.

This sequence belongs to the DadA oxidoreductase family. Requires FAD as cofactor.

It catalyses the reaction a D-alpha-amino acid + A + H2O = a 2-oxocarboxylate + AH2 + NH4(+). Its function is as follows. Oxidative deamination of D-amino acids. The polypeptide is D-amino acid dehydrogenase 3 (dadA3) (Mesorhizobium japonicum (strain LMG 29417 / CECT 9101 / MAFF 303099) (Mesorhizobium loti (strain MAFF 303099))).